A 141-amino-acid polypeptide reads, in one-letter code: Large ribosomal subunit protein uL16 (141 aa).

The tract at residues 1–21 (MLMPKRVKYRKQQRGHNRGMA) is disordered.

This sequence belongs to the universal ribosomal protein uL16 family. In terms of assembly, part of the 50S ribosomal subunit.

Binds 23S rRNA and is also seen to make contacts with the A and possibly P site tRNAs. The polypeptide is Large ribosomal subunit protein uL16 (Roseiflexus sp. (strain RS-1)).